Here is a 447-residue protein sequence, read N- to C-terminus: Phosphoglucosamine mutase (447 aa).

Ser-102 serves as the catalytic Phosphoserine intermediate. Positions 102, 241, 243, and 245 each coordinate Mg(2+). Ser-102 carries the post-translational modification Phosphoserine.

This sequence belongs to the phosphohexose mutase family. Mg(2+) is required as a cofactor. In terms of processing, activated by phosphorylation.

It carries out the reaction alpha-D-glucosamine 1-phosphate = D-glucosamine 6-phosphate. Catalyzes the conversion of glucosamine-6-phosphate to glucosamine-1-phosphate. In Pseudomonas syringae pv. syringae (strain B728a), this protein is Phosphoglucosamine mutase.